The sequence spans 464 residues: Cysteine--tRNA ligase (464 aa).

Cysteine 30 provides a ligand contact to Zn(2+). A 'HIGH' region motif is present at residues methionine 32–histidine 42. Zn(2+) contacts are provided by cysteine 214, histidine 239, and glutamate 243. A 'KMSKS' region motif is present at residues lysine 271–serine 275. ATP is bound at residue lysine 274.

It belongs to the class-I aminoacyl-tRNA synthetase family. Monomer. Zn(2+) serves as cofactor.

The protein resides in the cytoplasm. It catalyses the reaction tRNA(Cys) + L-cysteine + ATP = L-cysteinyl-tRNA(Cys) + AMP + diphosphate. This Janthinobacterium sp. (strain Marseille) (Minibacterium massiliensis) protein is Cysteine--tRNA ligase.